The sequence spans 195 residues: MGYIPYVIENTDRGERSYDIYSRLLKDRIVLLSGEINDSVASSIVAQLLFLEAEDPEKDIGLYINSPGGVITSGLSIYDTMNFIRPDVSTICIGQAASMGAFLLSCGAKGKRFSLPHSRIMIHQPLGGAQGQASDIEIISNEILRLKGLMNSILAQNSGQSLEQIAKDTDRDFYMSAKEAKEYGLIDKVLQKNVK.

The Nucleophile role is filled by Ser98. The active site involves His123.

This sequence belongs to the peptidase S14 family. Fourteen ClpP subunits assemble into 2 heptameric rings which stack back to back to give a disk-like structure with a central cavity, resembling the structure of eukaryotic proteasomes.

The protein resides in the cytoplasm. It catalyses the reaction Hydrolysis of proteins to small peptides in the presence of ATP and magnesium. alpha-casein is the usual test substrate. In the absence of ATP, only oligopeptides shorter than five residues are hydrolyzed (such as succinyl-Leu-Tyr-|-NHMec, and Leu-Tyr-Leu-|-Tyr-Trp, in which cleavage of the -Tyr-|-Leu- and -Tyr-|-Trp bonds also occurs).. Its function is as follows. Cleaves peptides in various proteins in a process that requires ATP hydrolysis. Has a chymotrypsin-like activity. Plays a major role in the degradation of misfolded proteins. This Helicobacter pylori (strain G27) protein is ATP-dependent Clp protease proteolytic subunit.